Reading from the N-terminus, the 326-residue chain is Protein MICROTUBULE BINDING PROTEIN 2C (326 aa).

Polar residues-rich tracts occupy residues 1–15 (MYEQQQHFMDLQSDS) and 34–46 (PHQSAAGTNSGNE). Disordered regions lie at residues 1 to 46 (MYEQ…SGNE) and 71 to 132 (ERSS…KALA). Positions 132–183 (AGAEKEEMSRLREQVNDLQTKLSEKEEVLKSMEMSKNQVNEIQEKLEATNRL) form a coiled coil.

It belongs to the microtubule binding protein 2C family. As to quaternary structure, interacts with STM. In terms of tissue distribution, expressed in seedlings, roots, flowers and developing ovules.

The protein localises to the cytoplasm. The protein resides in the cytoskeleton. Prevents homeodomain proteins (e.g. STM) association to plasmodesmata and, consequently, cell-to-cell transport. Binds to RNA. Alters STM RNA binding capacity. Regulates cytoskeleton (e.g. actin) organization that determinates cell shape. Regulates stomata patterning and drought tolerance. Involved in restricting tobamovirus (e.g. oilseed rape mosaic virus) infectivity, probably by interfering with cell-to-cell virus movement. This is Protein MICROTUBULE BINDING PROTEIN 2C from Arabidopsis thaliana (Mouse-ear cress).